The following is a 271-amino-acid chain: Putative pyruvate, phosphate dikinase regulatory protein (271 aa).

151–158 lines the ADP pocket; sequence GISRTSKT.

It belongs to the pyruvate, phosphate/water dikinase regulatory protein family. PDRP subfamily.

It carries out the reaction N(tele)-phospho-L-histidyl/L-threonyl-[pyruvate, phosphate dikinase] + ADP = N(tele)-phospho-L-histidyl/O-phospho-L-threonyl-[pyruvate, phosphate dikinase] + AMP + H(+). The catalysed reaction is N(tele)-phospho-L-histidyl/O-phospho-L-threonyl-[pyruvate, phosphate dikinase] + phosphate + H(+) = N(tele)-phospho-L-histidyl/L-threonyl-[pyruvate, phosphate dikinase] + diphosphate. Functionally, bifunctional serine/threonine kinase and phosphorylase involved in the regulation of the pyruvate, phosphate dikinase (PPDK) by catalyzing its phosphorylation/dephosphorylation. The polypeptide is Putative pyruvate, phosphate dikinase regulatory protein (Streptococcus uberis (strain ATCC BAA-854 / 0140J)).